We begin with the raw amino-acid sequence, 588 residues long: Arylsulfatase L (588 aa).

Residues 1 to 31 form the signal peptide; it reads MLHLHHSWLCFRSWLAGMLSVLLGLVPSASS. An N-linked (GlcNAc...) asparagine glycan is attached at Asn-32. Residues Asp-46 and Asp-47 each contribute to the Ca(2+) site. Asn-58 carries an N-linked (GlcNAc...) asparagine glycan. Position 86 (Cys-86) interacts with Ca(2+). The active-site Nucleophile is the Cys-86. Position 86 is a 3-oxoalanine (Cys) (Cys-86). Residue Asn-125 is glycosylated (N-linked (GlcNAc...) asparagine). Lys-145 contributes to the substrate binding site. His-147 is an active-site residue. Asn-258 carries an N-linked (GlcNAc...) asparagine glycan. Substrate is bound at residue His-301. A glycan (N-linked (GlcNAc...) asparagine) is linked at Asn-344. The Ca(2+) site is built by Asp-353 and His-354. Position 378 (Lys-378) interacts with substrate.

The protein belongs to the sulfatase family. The cofactor is Ca(2+). The conversion to 3-oxoalanine (also known as C-formylglycine, FGly), of a serine or cysteine residue in prokaryotes and of a cysteine residue in eukaryotes, is critical for catalytic activity.

It is found in the golgi apparatus. It localises to the golgi stack. The catalysed reaction is an aryl sulfate + H2O = a phenol + sulfate + H(+). Exhibits arylsulfatase activity towards the artificial substrate 4-methylumbelliferyl sulfate. May be essential for the correct composition of cartilage and bone matrix during development. Has no activity toward steroid sulfates. In Macaca fascicularis (Crab-eating macaque), this protein is Arylsulfatase L (ARSL).